A 255-amino-acid polypeptide reads, in one-letter code: Homeobox protein Hox-D4 (255 aa).

A disordered region spans residues 31–128 (EQGADYYGGG…KQPPPGTALK (98 aa)). The segment covering 94 to 109 (EPCPAPPAPPPAPLPG) has biased composition (pro residues). The Antp-type hexapeptide motif lies at 133-138 (VYPWMK). Positions 154-213 (PKRSRTAYTRQQVLELEKEFHFNRYLTRRRRIEIAHTLCLSERQIKIWFQNRRMKWKKDH) form a DNA-binding region, homeobox. The interval 212-255 (DHKLPNTKGRSSSSSSSSSCSSSVAPSQHLQPMAKDHHTDLTTL) is disordered. Residues 222 to 234 (SSSSSSSSSCSSS) show a composition bias toward low complexity. Positions 245–255 (AKDHHTDLTTL) are enriched in basic and acidic residues.

Belongs to the Antp homeobox family. Deformed subfamily. In terms of assembly, forms a DNA-binding heterodimer with transcription factor PBX1.

It localises to the nucleus. Its function is as follows. Sequence-specific transcription factor which is part of a developmental regulatory system that provides cells with specific positional identities on the anterior-posterior axis. In Gorilla gorilla gorilla (Western lowland gorilla), this protein is Homeobox protein Hox-D4 (HOXD4).